We begin with the raw amino-acid sequence, 226 residues long: 7-cyano-7-deazaguanine synthase (226 aa).

8 to 18 provides a ligand contact to ATP; sequence ISGGLDSTTCL. Residues C188, C198, C201, and C204 each coordinate Zn(2+).

It belongs to the QueC family. The cofactor is Zn(2+).

It catalyses the reaction 7-carboxy-7-deazaguanine + NH4(+) + ATP = 7-cyano-7-deazaguanine + ADP + phosphate + H2O + H(+). It functions in the pathway purine metabolism; 7-cyano-7-deazaguanine biosynthesis. Functionally, catalyzes the ATP-dependent conversion of 7-carboxy-7-deazaguanine (CDG) to 7-cyano-7-deazaguanine (preQ(0)). This is 7-cyano-7-deazaguanine synthase from Coxiella burnetii (strain Dugway 5J108-111).